Reading from the N-terminus, the 340-residue chain is Citramalyl-CoA lyase, mitochondrial (340 aa).

The N-terminal 22 residues, 1-22, are a transit peptide targeting the mitochondrion; that stretch reads MALRLLRRAARGAAAAALLRLK. Substrate-binding residues include Tyr-50, Lys-57, and Lys-61. An N6-acetyllysine mark is found at Lys-57 and Lys-61. 2 positions are modified to N6-acetyllysine; alternate: Lys-82 and Lys-92. N6-succinyllysine; alternate is present on residues Lys-82 and Lys-92. Arg-107 lines the substrate pocket. Mg(2+)-binding residues include Glu-171 and Asp-206. 272 to 273 serves as a coordination point for substrate; that stretch reads IH. Residue Lys-309 is modified to N6-succinyllysine. Asp-320 is an active-site residue.

The protein belongs to the HpcH/HpaI aldolase family. Citrate lyase beta subunit-like subfamily. As to quaternary structure, homotrimer. Mg(2+) is required as a cofactor.

It localises to the mitochondrion. The enzyme catalyses glyoxylate + acetyl-CoA + H2O = (S)-malate + CoA + H(+). It carries out the reaction propanoyl-CoA + glyoxylate + H2O = 3-methylmalate + CoA + H(+). The catalysed reaction is (3S)-citramalyl-CoA = pyruvate + acetyl-CoA. It catalyses the reaction (S)-malyl-CoA + H2O = (S)-malate + CoA + H(+). In terms of biological role, mitochondrial citramalyl-CoA lyase indirectly involved in the vitamin B12 metabolism. Converts citramalyl-CoA into acetyl-CoA and pyruvate in the C5-dicarboxylate catabolism pathway. The C5-dicarboxylate catabolism pathway is required to detoxify itaconate, a vitamin B12-poisoning metabolite. Also acts as a malate synthase in vitro, converting glyoxylate and acetyl-CoA to malate. Also displays malyl-CoA thioesterase activity. Also acts as a beta-methylmalate synthase in vitro, by mediating conversion of glyoxylate and propionyl-CoA to beta-methylmalate. Also has very weak citramalate synthase activity in vitro. This chain is Citramalyl-CoA lyase, mitochondrial, found in Homo sapiens (Human).